We begin with the raw amino-acid sequence, 527 residues long: MDPNTWSADLFQLASQWQEKGLLTRYNVFMAISITVTALYLIHKGISRARSFRAPLVGRRFSWEPKWLIGLRFSQYGLEHLMEGCKRFNDGIFKVARNDTDILVIPNRYVDELHSKPEEHISAIKAHMKNLLGKYSTIDILQEGNLHTHVLQTKLTPNLGSLMSTIEEELRFAMTEEIPSTHEDWKDVSIYDIILHLVARISARVFVGQPTCRNQEWLDTSIRFTEHAFLTLAILRRLPKFLHPIVAPLLPSYWAVHRDLQTAKRIISPIVKQRTADEASGEPGYKKPTDLLQWMIDVASPRDGQPDKLAHRQLVLSLAAIHTTTMAVAYAIYDLCQFPEYVEPLRQEITDSLEQDGKWAKTTLTKMHKLDSFIKESQRLSPPSLLSFQRIVMQEVTLSDGTALPKGTHISVPAAEVLQGKAFDSSFDGFRYSRRRQNSGEAHKYQFATTDKNSLHFGHGKYACPGRFFAAYEIKMIISHLLMDYDFRFPPGTSRPKVFSADEVLLPDPSTRVLMHRRTDSAHSNCH.

Residues 21-43 (GLLTRYNVFMAISITVTALYLIH) traverse the membrane as a helical segment. Residue cysteine 464 participates in heme binding.

Belongs to the cytochrome P450 family. It depends on heme as a cofactor.

Its subcellular location is the membrane. The protein operates within secondary metabolite biosynthesis; terpenoid biosynthesis. Its function is as follows. Cytochrome P450 monooxygenase; part of the gene cluster that mediates the biosynthesis of 15-deoxyoxalicine B. The first step of the pathway is the synthesis of nicotinyl-CoA from nicotinic acid by the nicotinic acid-CoA ligase olcI. Nicotinyl-CoA is then a substrate of polyketide synthase olcA to produce 4-hydroxy-6-(3-pyridinyl)-2H-pyran-2-one (HPPO) which is further prenylated by the polyprenyl transferase olcH to yield geranylgeranyl-HPPO. Geranylgeranyl pyrophosphate is provided by the cluster-specific geranylgeranyl pyrophosphate synthase olcC. The FAD-dependent monooxygenase olcE catalyzes the epoxidation of geranylgeranyl-HPPO and the terpene cyclase olcD catalyzes the cyclization of the terpenoid component, resulting in the formation of the tricyclic terpene moiety seen in predecaturin E. The cytochrome P450 monooxygenase then catalyzes the allylic oxidation of predecaturin E, which is followed by spirocylization with concomitant loss of one molecule of water to form decaturin E. Decaturin E is the substrate of the cytochrome P450 monooxygenase olcJ which hydroxylates it at the C-29 position to form decaturin F. The short-chain dehydrogenase/reductase olcF may catalyze the oxidation of decaturin F to generate the 29-hydroxyl-27-one intermediate, and subsequent hemiacetal formation probably leads to the formation of decaturin C. The dioxygenase olcK may be a peroxisomal enzyme that catalyzes the hydroxylation of decaturin C into decaturin A once decaturin C is shuttled into the peroxisome by the MFS transporter olcL. Finally the cytochrome P450 monooxygenase olcB catalyzes the oxidative rearrangement to yield 15-deoxyoxalicine B. In the absence of olcJ, decaturin E may be shunted to a pathway in which it is oxidized to a ketone, possibly by olcF, to form decaturin D, which undergoes further allylic oxidation to yield decaturin G. Moreover, in the absence of oclK or oclL, oclB can convert decaturin C into 15-deoxyoxalicine A. In Penicillium canescens, this protein is Cytochrome P450 monooxygenase olcJ.